A 2313-amino-acid polypeptide reads, in one-letter code: Serine/threonine-protein kinase smg-1 (2313 aa).

A compositionally biased stretch (basic and acidic residues) spans 779 to 791 (NRKSSDKKPKSTT). The tract at residues 779-798 (NRKSSDKKPKSTTEDVPPPA) is disordered. Residues 1045–1528 (ARERLQLVES…VFQVVSGAAS (484 aa)) enclose the FAT domain. The HEAT repeat unit spans residues 1478–1514 (VHVWKEILPQLFARLSHPSDHIRKTLVDLISRVCTAA). Positions 1746-2091 (VADNVTILPT…DTIELFQLRV (346 aa)) constitute a PI3K/PI4K catalytic domain. The interval 1752–1758 (ILPTKTR) is G-loop. Residues 1954–1962 (GLGDRHLDN) are catalytic loop. The activation loop stretch occupies residues 1974-1998 (HIDYNICFDKGKILRIPETVPFRLS). Residues 2281 to 2313 (RKLSPREEADVLIAEATSSANLAQMYEGWTAWV) form the FATC domain.

This sequence belongs to the PI3/PI4-kinase family. In terms of assembly, component of a post-splicing multiprotein NMD complex. Requires Mn(2+) as cofactor.

It localises to the cytoplasm. The enzyme catalyses L-seryl-[protein] + ATP = O-phospho-L-seryl-[protein] + ADP + H(+). The catalysed reaction is L-threonyl-[protein] + ATP = O-phospho-L-threonyl-[protein] + ADP + H(+). Its function is as follows. Serine/threonine protein kinase involved in mRNA surveillance. Recognizes the substrate consensus sequence [ST]-Q. Involved in nonsense-mediated decay (NMD) of mRNAs containing premature stop codons by phosphorylating smg-2. The chain is Serine/threonine-protein kinase smg-1 (smg-1) from Caenorhabditis briggsae.